The primary structure comprises 260 residues: WUSCHEL-related homeobox 2 (260 aa).

Residues 10 to 74 (ASSSRWNPTK…NHKARQRQKQ (65 aa)) constitute a DNA-binding region (homeobox; WUS-type).

Belongs to the WUS homeobox family.

The protein resides in the nucleus. Functionally, probable transcription factor involved in embryonic patterning. Required for apical embryo development after fertilization. Its specific localization to the apical daughter cell of the zygote, while WOX8 is confined to the basal cell, suggests that the asymmetric division of the plant zygote separates determinants of apical and basal cell fates. The chain is WUSCHEL-related homeobox 2 (WOX2) from Arabidopsis thaliana (Mouse-ear cress).